Consider the following 1038-residue polypeptide: Activated CDC42 kinase 1 (1038 aa).

Residues 1 to 110 (MQPEEGTGWL…TSPAPGGPAG (110 aa)) are SAM-like domain. Residues 90-114 (PPHHSQSTFRKTSPAPGGPAGEGPL) are disordered. The region spanning 126 to 385 (LRLLEKLGDG…PTFVALRDFL (260 aa)) is the Protein kinase domain. ATP-binding positions include 132 to 140 (LGDGSFGVV) and Lys-158. Asp-252 acts as the Proton acceptor in catalysis. Tyr-284 is modified (phosphotyrosine; by SRC and autocatalysis). The 61-residue stretch at 388 to 448 (AQPTDMRALQ…PRNVVTSVAG (61 aa)) folds into the SH3 domain. The CRIB domain maps to 454 to 466 (ISQPLQNSFIHTG). The interval 497 to 535 (LSVELSTSRPPQHLGGVKKPTYDPVSEDQDPLSSDFKRL) is disordered. At Tyr-518 the chain carries Phosphotyrosine. The segment at 623-652 (DWDARPLPPPPAYDDVAQDEDDFEICSINS) is required for interaction with SRC. The tract at residues 632–635 (PPAY) is required for interaction with NEDD4. 2 disordered regions span residues 659–702 (VPAG…SSAQ) and 718–840 (LQAP…GPRA). Ser-724 carries the phosphoserine modification. The EBD domain stretch occupies residues 733–876 (GDDKPQVPPR…SYLERYQRFL (144 aa)). 3 stretches are compositionally biased toward pro residues: residues 738–749 (QVPPRVPIPPRP), 772–783 (PASPPRVPPREP), and 794–805 (PLVPPGSSPLPP). Phosphotyrosine is present on Tyr-827. Arg-839 carries the omega-N-methylarginine modification. 2 positions are modified to phosphotyrosine: Tyr-859 and Tyr-872. A Phosphoserine modification is found at Ser-881. The segment at 917 to 957 (LDPKANFSTNNSNPGARPPPPRATARLPQRGCPGDGPEAGR) is disordered. In terms of domain architecture, UBA spans 958-996 (PADKIQMAMVHGVTTEECQAALQCHGWSVQRAAQYLKVE).

It belongs to the protein kinase superfamily. Tyr protein kinase family. As to quaternary structure, interacts with NEDD4 (via WW3 domain). NEDD4L and EGF promote association with NEDD4. Homodimer. Interacts with AR, CDC42, WWASL and WWOX. Interacts with CSPG4 (activated). Interacts with MERTK (activated); stimulates autophosphorylation. May interact (phosphorylated) with HSP90AB1; maintains kinase activity. Interacts with NPHP1. Interacts with SNX9 (via SH3 domain). Interacts with SRC (via SH2 and SH3 domain). Interacts with EGFR, and this interaction is dependent on EGF stimulation and kinase activity of EGFR. Interacts (via kinase domain) with AKT1. Part of a collagen stimulated complex involved in cell migration composed of CDC42, CRK, TNK2 and BCAR1/p130cas. Interacts with BCAR1/p130cas via SH3 domains. Forms complexes with GRB2 and numerous receptor tyrosine kinases (RTK) including LTK, AXL or PDGFRL, in which GRB2 promotes RTK recruitment by TNK2. Mg(2+) is required as a cofactor. In terms of processing, autophosphorylation regulates kinase activity. Phosphorylation on Tyr-518 is required for interaction with SRC and is observed during association with clathrin-coated pits. Polyubiquitinated by NEDD4 and NEDD4L. Degradation can be induced by EGF and is lysosome-dependent. In terms of tissue distribution, the Tyr-284 phosphorylated form shows a significant increase in expression in breast cancers during the progressive stages i.e. normal to hyperplasia (ADH), ductal carcinoma in situ (DCIS), invasive ductal carcinoma (IDC) and lymph node metastatic (LNMM) stages. It also shows a significant increase in expression in prostate cancers during the progressive stages.

The protein localises to the cell membrane. It localises to the nucleus. Its subcellular location is the endosome. It is found in the cell junction. The protein resides in the adherens junction. The protein localises to the cytoplasmic vesicle membrane. It localises to the cytoplasmic vesicle. Its subcellular location is the clathrin-coated vesicle. It is found in the membrane. The protein resides in the clathrin-coated pit. The protein localises to the cytoplasm. It localises to the perinuclear region. Its subcellular location is the cytosol. It catalyses the reaction L-tyrosyl-[protein] + ATP = O-phospho-L-tyrosyl-[protein] + ADP + H(+). The catalysed reaction is L-seryl-[protein] + ATP = O-phospho-L-seryl-[protein] + ADP + H(+). It carries out the reaction L-threonyl-[protein] + ATP = O-phospho-L-threonyl-[protein] + ADP + H(+). Inhibited by AIM-100 (4-amino-5,6-biaryl-furo[2,3-d]pyrimidine), which suppresses activating phosphorylation at Tyr-284. Repressed by dasatinib. Its function is as follows. Non-receptor tyrosine-protein and serine/threonine-protein kinase that is implicated in cell spreading and migration, cell survival, cell growth and proliferation. Transduces extracellular signals to cytosolic and nuclear effectors. Phosphorylates AKT1, AR, MCF2, WASL and WWOX. Implicated in trafficking and clathrin-mediated endocytosis through binding to epidermal growth factor receptor (EGFR) and clathrin. Binds to both poly- and mono-ubiquitin and regulates ligand-induced degradation of EGFR, thereby contributing to the accumulation of EGFR at the limiting membrane of early endosomes. Downstream effector of CDC42 which mediates CDC42-dependent cell migration via phosphorylation of BCAR1. May be involved both in adult synaptic function and plasticity and in brain development. Activates AKT1 by phosphorylating it on 'Tyr-176'. Phosphorylates AR on 'Tyr-267' and 'Tyr-363' thereby promoting its recruitment to androgen-responsive enhancers (AREs). Phosphorylates WWOX on 'Tyr-287'. Phosphorylates MCF2, thereby enhancing its activity as a guanine nucleotide exchange factor (GEF) toward Rho family proteins. Contributes to the control of AXL receptor levels. Confers metastatic properties on cancer cells and promotes tumor growth by negatively regulating tumor suppressor such as WWOX and positively regulating pro-survival factors such as AKT1 and AR. Phosphorylates WASP. The sequence is that of Activated CDC42 kinase 1 (TNK2) from Homo sapiens (Human).